A 174-amino-acid polypeptide reads, in one-letter code: Small t antigen (174 aa).

M1 carries the post-translational modification N-acetylmethionine; by host. The J domain occupies 12–75 (QLMDLLGLER…VKYAHQPDFG (64 aa)). Residues 103–116 (CAKKMSANCICLLC) form a C4-type; atypical zinc finger. The H1C3-type; atypical zinc finger occupies 122 to 143 (HENRKLYRKDPLVWVDCYCFDC).

As to quaternary structure, interacts with host PPP2R1A; the interaction inhibits PP2A activity.

It is found in the host cytoplasm. The protein localises to the host nucleus. Its function is as follows. Promotes efficient viral genome replication by accelerating both G1 and S phase progression of the cell cycle. Inhibits host PP2A by binding to the A subunit, thereby displacing lower affinity regulatory B subunit. Inactivation of PP2A in turn results in the transactivation of cyclin A and cyclin D1 promoters. Late during the infection cycle, ST may induce dephosphorylation of host eIF4E-binding protein EIF4EBP1 leading to the inhibition of cap-dependent translation. May establish and maintain high levels of viral genomes during persistent infection in cell culture. This chain is Small t antigen, found in Simian virus 40 (SV40).